The primary structure comprises 501 residues: Glucose-6-phosphate exchanger SLC37A2 (501 aa).

Residues 19–39 traverse the membrane as a helical segment; that stretch reads SWFRGFILLLTFLIYACYHMS. Residues N53, N62, and N68 are each glycosylated (N-linked (GlcNAc...) asparagine). Transmembrane regions (helical) follow at residues 88-108, 118-140, 142-164, 179-199, and 210-230; these read GAVD…SGIF, LSAG…FWNI, MLWY…WPSV, FIMG…SLIA, and SFIV…LFLI. A compositionally biased stretch (basic and acidic residues) spans 240-252; the sequence is PPRHHDDPEKEQD. The segment at 240–266 is disordered; sequence PPRHHDDPEKEQDNPEDPVNSPYSSRE. A run of 6 helical transmembrane segments spans residues 303 to 323, 334 to 354, 362 to 382, 391 to 411, 434 to 454, and 462 to 482; these read CLLF…LYIF, GDLS…AGLI, ATTC…YNYI, IVML…ITTA, AIID…AGLI, and VFYM…RLVY.

Belongs to the major facilitator superfamily. Organophosphate:Pi antiporter (OPA) (TC 2.A.1.4) family. As to expression, highly expressed in bone marrow derived macrophages, and weakly in spleen.

It is found in the endoplasmic reticulum membrane. The enzyme catalyses D-glucose 6-phosphate(in) + phosphate(out) = D-glucose 6-phosphate(out) + phosphate(in). With respect to regulation, inhibited by vanadate but not by chlorogenic acid. In terms of biological role, inorganic phosphate and glucose-6-phosphate antiporter. May transport cytoplasmic glucose-6-phosphate into the lumen of the endoplasmic reticulum and translocate inorganic phosphate into the opposite direction. Independent of a lumenal glucose-6-phosphatase. May not play a role in homeostatic regulation of blood glucose levels. The sequence is that of Glucose-6-phosphate exchanger SLC37A2 from Mus musculus (Mouse).